We begin with the raw amino-acid sequence, 199 residues long: Large ribosomal subunit protein bL25 (199 aa).

The protein belongs to the bacterial ribosomal protein bL25 family. CTC subfamily. Part of the 50S ribosomal subunit; part of the 5S rRNA/L5/L18/L25 subcomplex. Contacts the 5S rRNA. Binds to the 5S rRNA independently of L5 and L18.

In terms of biological role, this is one of the proteins that binds to the 5S RNA in the ribosome where it forms part of the central protuberance. The polypeptide is Large ribosomal subunit protein bL25 (Caldanaerobacter subterraneus subsp. tengcongensis (strain DSM 15242 / JCM 11007 / NBRC 100824 / MB4) (Thermoanaerobacter tengcongensis)).